We begin with the raw amino-acid sequence, 395 residues long: XK-related protein 8 (395 aa).

Residues 1 to 12 (MPWSSRGALLRD) are Cytoplasmic-facing. A helical transmembrane segment spans residues 13–33 (LVLGVLGTAAFLLDLGTDLWA). The Extracellular segment spans residues 34–47 (AVQYALGGRYLWAA). A helical membrane pass occupies residues 48-68 (LVLALLGLASVALQLFSWLWL). Residues 69–158 (RADPAGLHGS…VLAIMLQSGR (90 aa)) lie on the Cytoplasmic side of the membrane. A helical transmembrane segment spans residues 159–179 (AEYYQWVGICTSFLGISWALL). Residues 180 to 200 (DYHRALRTCLPSRPLLGLGSS) lie on the Extracellular side of the membrane. A helical transmembrane segment spans residues 201–221 (VIYFLWNLLLLWPRVLAVALF). The Cytoplasmic portion of the chain corresponds to 222–223 (SA). The chain crosses the membrane as a helical span at residues 224–244 (LFPSYVALHFLGLWLVLLLWV). Residues 245-258 (WLQGTDFMPDPSSE) lie on the Extracellular side of the membrane. A helical membrane pass occupies residues 259–279 (WLYQVTVATILYFSWFNVAEG). Residues 280–284 (RTRGR) lie on the Cytoplasmic side of the membrane. A helical transmembrane segment spans residues 285–305 (AIIHFAFLLSDSILLVATWVT). Over 306–312 (HSSWLPS) the chain is Extracellular. A helical membrane pass occupies residues 313-333 (GIPLQLWLPVGCGCFFLGLAL). At 334–395 (RLVYYHWLHP…KDEAALPVKG (62 aa)) the chain is on the cytoplasmic side. Position 362 is a phosphoserine (Ser362). A Phosphothreonine modification is found at Thr375.

The protein belongs to the XK family. As to quaternary structure, interacts with BSG and NPTN; which act as chaperones to localize XKR8 at the cell membrane. In terms of assembly, homodimer. In terms of processing, undergoes proteolytic processing by caspase-3 (CASP3), leading to its activation. Phosphorylation at Thr-375 activates the phospholipid scramblase activity.

It localises to the cell membrane. The protein localises to the cytoplasm. The protein resides in the perinuclear region. The catalysed reaction is a 1,2-diacyl-sn-glycero-3-phospho-L-serine(in) = a 1,2-diacyl-sn-glycero-3-phospho-L-serine(out). Its activity is regulated as follows. Activated upon caspase cleavage to generate the XK-related protein 8, processed form. Does not act prior the onset of apoptosis. In terms of biological role, phospholipid scramblase that promotes phosphatidylserine exposure on apoptotic cell surface. Phosphatidylserine is a specific marker only present at the surface of apoptotic cells and acts as a specific signal for engulfment. Required for the clearance of apoptotic cells, such as engulfment of apoptotic germ cells by Sertoli cells, clearance of senescent neutrophils or regulation of bipolar cell numbers in the retina. Has no effect on calcium-induced exposure of phosphatidylserine. Promotes myoblast differentiation and survival. In Pan troglodytes (Chimpanzee), this protein is XK-related protein 8.